The sequence spans 85 residues: Small ribosomal subunit protein uS17 (85 aa).

Belongs to the universal ribosomal protein uS17 family. In terms of assembly, part of the 30S ribosomal subunit.

One of the primary rRNA binding proteins, it binds specifically to the 5'-end of 16S ribosomal RNA. The chain is Small ribosomal subunit protein uS17 from Geobacter metallireducens (strain ATCC 53774 / DSM 7210 / GS-15).